The chain runs to 589 residues: Serine/threonine-protein kinase shk2 (589 aa).

One can recognise a PH domain in the interval 23–125; the sequence is GIIRSGWVML…WMDLISSRAL (103 aa). Residues 129-142 enclose the CRIB domain; the sequence is VSSPMNPKHQVHVG. The Protein kinase domain occupies 309 to 566; the sequence is FNVKHKLGQG…AAELLTHSFL (258 aa). Residues 315-323 and Lys-343 each bind ATP; that span reads LGQGASGSV. Asp-434 acts as the Proton acceptor in catalysis.

It belongs to the protein kinase superfamily. STE Ser/Thr protein kinase family. STE20 subfamily.

It catalyses the reaction L-seryl-[protein] + ATP = O-phospho-L-seryl-[protein] + ADP + H(+). The enzyme catalyses L-threonyl-[protein] + ATP = O-phospho-L-threonyl-[protein] + ADP + H(+). In terms of biological role, forms an activated complex with GTP-bound Ras-like cdc42. Participates in Ras-dependent morphological control and mating response pathways. In Schizosaccharomyces pombe (strain 972 / ATCC 24843) (Fission yeast), this protein is Serine/threonine-protein kinase shk2 (shk2).